The chain runs to 494 residues: Chromosomal replication initiator protein DnaA (494 aa).

Residues 1 to 103 (MTNIGGPVVE…LRVEVIVRGM (103 aa)) form a domain I, interacts with DnaA modulators region. The interval 103-148 (MKRVSKGVVCRTSAAPVVLEGQTASSFVESYTEPSVKDIEAGVFGS) is domain II. Residues 149–371 (PLDSRYTFES…GAFNQLLFRQ (223 aa)) are domain III, AAA+ region. The ATP site is built by G195, G197, K198, and T199. A domain IV, binds dsDNA region spans residues 372 to 494 (SFESDLSLER…LKRLIGEQAA (123 aa)).

The protein belongs to the DnaA family. In terms of assembly, oligomerizes as a right-handed, spiral filament on DNA at oriC.

The protein resides in the cytoplasm. In terms of biological role, plays an essential role in the initiation and regulation of chromosomal replication. ATP-DnaA binds to the origin of replication (oriC) to initiate formation of the DNA replication initiation complex once per cell cycle. Binds the DnaA box (a 9 base pair repeat at the origin) and separates the double-stranded (ds)DNA. Forms a right-handed helical filament on oriC DNA; dsDNA binds to the exterior of the filament while single-stranded (ss)DNA is stabiized in the filament's interior. The ATP-DnaA-oriC complex binds and stabilizes one strand of the AT-rich DNA unwinding element (DUE), permitting loading of DNA polymerase. After initiation quickly degrades to an ADP-DnaA complex that is not apt for DNA replication. Binds acidic phospholipids. The polypeptide is Chromosomal replication initiator protein DnaA (Bartonella quintana (strain Toulouse) (Rochalimaea quintana)).